The sequence spans 552 residues: uncharacterized protein (552 aa).

This is an uncharacterized protein from Methanocaldococcus jannaschii (strain ATCC 43067 / DSM 2661 / JAL-1 / JCM 10045 / NBRC 100440) (Methanococcus jannaschii).